The sequence spans 237 residues: Golgi anti-apoptotic protein (237 aa).

Residues 1–37 (MAMPSLSACSSIEDDFNYGSSVASASVHIRMAFLRKV) lie on the Cytoplasmic side of the membrane. A helical transmembrane segment spans residues 38 to 58 (YGILCLQFLLTTATTAVFLYF). The Lumenal segment spans residues 59-67 (DCMRTFIQG). A helical transmembrane segment spans residues 68–88 (SPVLILASMFGSIGLIFALTL). Topologically, residues 89–94 (HRHKHP) are cytoplasmic. A helical transmembrane segment spans residues 95 to 115 (LNLYLLCGFTLSESLTLASVV). Residue T116 is a topological domain, lumenal. The chain crosses the membrane as a helical span at residues 117-137 (FYDVHVVMQAFMLTTAAFLAL). Over 138–151 (TTYTLQSKRDFSKL) the chain is Cytoplasmic. The helical transmembrane segment at 152–172 (GAGLFAALWILILSGLLGIFV) threads the bilayer. Over 173-174 (QN) the chain is Lumenal. A helical membrane pass occupies residues 175-195 (ETVKLVLSAFGALVFCGFIIY). Residues 196 to 209 (DTHSLIHKLSPEEY) lie on the Cytoplasmic side of the membrane. The segment at residues 210–230 (VLASINLYLDIINLFLHLLQL) is an intramembrane region (helical). At 231–237 (LEVSNKK) the chain is on the cytoplasmic side.

The protein belongs to the BI1 family. LFG subfamily.

The protein resides in the host Golgi apparatus membrane. May affect virulence through inhibition of apoptosis. The chain is Golgi anti-apoptotic protein (L6) from Vaccinia virus (strain LC16m0) (VACV).